A 266-amino-acid polypeptide reads, in one-letter code: Adaptin ear-binding coat-associated protein 2 (266 aa).

2 disordered regions span residues 165-198 (MRKK…KSST) and 245-266 (DFTK…WVQF). Phosphoserine is present on Ser-181. 2 short sequence motifs (WXXF motif) span residues 243–246 (WGDF) and 263–266 (WVQF). The segment covering 249 to 266 (STGSPSSQSQPGTGWVQF) has biased composition (low complexity).

Belongs to the NECAP family. In terms of assembly, interacts with AP1G1 and AP2A1 components of the adapter protein complexes AP-1 and AP-2. Interacts with the GAE domain proteins GGA1, GGA2 and GGA3. In terms of tissue distribution, expressed in brain, heart, kidney, liver, lung, skeletal muscles and testis (at protein level).

The protein localises to the cytoplasmic vesicle. It localises to the clathrin-coated vesicle membrane. It is found in the cell membrane. Its function is as follows. Involved in endocytosis. The sequence is that of Adaptin ear-binding coat-associated protein 2 (Necap2) from Mus musculus (Mouse).